Reading from the N-terminus, the 682-residue chain is Acyl-CoA synthetase short-chain family member 3, mitochondrial (682 aa).

The transit peptide at 1–29 (MKPSWLQCRKVTGAGTLGAPLPGSPSVRG) directs the protein to the mitochondrion. 222 to 225 (EPGR) serves as a coordination point for CoA. Residues 420–422 (GER) and 441–446 (DHWWQT) contribute to the ATP site. Residue Lys513 is modified to N6-succinyllysine. Lys519 carries the N6-acetyllysine modification. Asp534, Arg549, and Arg560 together coordinate ATP. Residue Arg619 coordinates CoA.

It belongs to the ATP-dependent AMP-binding enzyme family.

It is found in the mitochondrion matrix. The catalysed reaction is acetate + ATP + CoA = acetyl-CoA + AMP + diphosphate. It catalyses the reaction propanoate + ATP + CoA = propanoyl-CoA + AMP + diphosphate. It carries out the reaction butanoate + ATP + CoA = butanoyl-CoA + AMP + diphosphate. Its function is as follows. Catalyzes the synthesis of acetyl-CoA from short-chain fatty acids. Propionate is the preferred substrate but can also utilize acetate and butyrate with a much lower affinity. This Mus musculus (Mouse) protein is Acyl-CoA synthetase short-chain family member 3, mitochondrial (Acss3).